We begin with the raw amino-acid sequence, 228 residues long: RNA chaperone ProQ (228 aa).

Residues 105-178 form a disordered region; sequence EAKARVQAQR…REEQHTPVSD (74 aa). Basic and acidic residues-rich tracts occupy residues 117-136 and 146-173; these read QQAK…DAPR and RRKE…EEQH.

It belongs to the ProQ family.

The protein resides in the cytoplasm. Its function is as follows. RNA chaperone with significant RNA binding, RNA strand exchange and RNA duplexing activities. May regulate ProP activity through an RNA-based, post-transcriptional mechanism. This chain is RNA chaperone ProQ, found in Citrobacter koseri (strain ATCC BAA-895 / CDC 4225-83 / SGSC4696).